A 356-amino-acid chain; its full sequence is Phenylalanine--tRNA ligase alpha subunit (356 aa).

Glu260 is a Mg(2+) binding site.

The protein belongs to the class-II aminoacyl-tRNA synthetase family. Phe-tRNA synthetase alpha subunit type 1 subfamily. As to quaternary structure, tetramer of two alpha and two beta subunits. Mg(2+) serves as cofactor.

It is found in the cytoplasm. It catalyses the reaction tRNA(Phe) + L-phenylalanine + ATP = L-phenylalanyl-tRNA(Phe) + AMP + diphosphate + H(+). This Gluconobacter oxydans (strain 621H) (Gluconobacter suboxydans) protein is Phenylalanine--tRNA ligase alpha subunit.